The primary structure comprises 461 residues: ATP synthase subunit beta (461 aa).

149-156 is an ATP binding site; that stretch reads GGAGVGKT.

This sequence belongs to the ATPase alpha/beta chains family. In terms of assembly, F-type ATPases have 2 components, CF(1) - the catalytic core - and CF(0) - the membrane proton channel. CF(1) has five subunits: alpha(3), beta(3), gamma(1), delta(1), epsilon(1). CF(0) has three main subunits: a(1), b(2) and c(9-12). The alpha and beta chains form an alternating ring which encloses part of the gamma chain. CF(1) is attached to CF(0) by a central stalk formed by the gamma and epsilon chains, while a peripheral stalk is formed by the delta and b chains.

Its subcellular location is the cell membrane. It carries out the reaction ATP + H2O + 4 H(+)(in) = ADP + phosphate + 5 H(+)(out). Its function is as follows. Produces ATP from ADP in the presence of a proton gradient across the membrane. The catalytic sites are hosted primarily by the beta subunits. In Caldanaerobacter subterraneus subsp. tengcongensis (strain DSM 15242 / JCM 11007 / NBRC 100824 / MB4) (Thermoanaerobacter tengcongensis), this protein is ATP synthase subunit beta.